The following is a 682-amino-acid chain: DNA ligase (682 aa).

NAD(+) contacts are provided by residues 43–47 (DSEYD), 92–93 (SL), and D123. K125 functions as the N6-AMP-lysine intermediate in the catalytic mechanism. Residues R146, E184, K302, and K326 each contribute to the NAD(+) site. C420, C423, C438, and C443 together coordinate Zn(2+). The region spanning 603–682 (TTKGFFTGKK…TFLQKLLIVL (80 aa)) is the BRCT domain.

Belongs to the NAD-dependent DNA ligase family. LigA subfamily. The cofactor is Mg(2+). Mn(2+) is required as a cofactor.

It catalyses the reaction NAD(+) + (deoxyribonucleotide)n-3'-hydroxyl + 5'-phospho-(deoxyribonucleotide)m = (deoxyribonucleotide)n+m + AMP + beta-nicotinamide D-nucleotide.. DNA ligase that catalyzes the formation of phosphodiester linkages between 5'-phosphoryl and 3'-hydroxyl groups in double-stranded DNA using NAD as a coenzyme and as the energy source for the reaction. It is essential for DNA replication and repair of damaged DNA. In Lawsonia intracellularis (strain PHE/MN1-00), this protein is DNA ligase.